The chain runs to 862 residues: Fork head protein homolog 2 (862 aa).

The 70-residue stretch at 83-152 folds into the FHA domain; the sequence is VSIGRNTDPL…NGAKVNFQRT (70 aa). The fork-head DNA-binding region spans 339–430; it reads VKPPHSYATM…QQEFLNKWNT (92 aa). 4 disordered regions span residues 498–528, 611–663, 698–730, and 750–846; these read PSKG…QEQR, SDSA…GTTT, PERG…LQTS, and ESNN…ANAK. The segment covering 504–520 has biased composition (low complexity); the sequence is PASQQSQPPVSHQNQSQ. Residues 611–644 show a composition bias toward polar residues; sequence SDSADKSTNNNGGTKMNLPAISTSSLDENGNLEP. Low complexity predominate over residues 645–655; sequence TTTTSSGNSNS. Residue Ser708 is modified to Phosphoserine. Over residues 712-726 the composition is skewed to low complexity; sequence SNSNNTNNNGANNSN. 2 stretches are compositionally biased toward polar residues: residues 750 to 770 and 778 to 788; these read ESNN…NVKS and LQFSSTNNTPA. Residues 804 to 829 are compositionally biased toward basic and acidic residues; the sequence is IKAKENENATSEKDSDSNSNDLETKD. Positions 830–844 are enriched in polar residues; it reads INSSPLKNQGGSTAN. Phosphoserine occurs at positions 832 and 833.

As to quaternary structure, interacts with MCM1. Interacts with NDD1. Interacts with the origin recognition complex (ORC) composed of ORC1 to ORC6.

The protein resides in the nucleus. Its subcellular location is the cytoplasm. It is found in the cytosol. Transcription factor that regulates the expression of the CLB2 cluster of genes during the G2/M phase of the mitotic cell cycle. The CLB2 cluster of genes includes mitotic regulators such as CLB1, CLB2, CDC5 and CDC20 as well as SWI5 and ACE2, transcription factors required for the subsequent temporal wave of cell cycle regulated gene expression in the M/G1 phase interval. Involved in HMRa silencing. FKH1 and FKH2 associate with the coding regions of active genes and influence, in opposing ways, transcriptional elongation and termination, and coordinate early transcription elongation and pre-mRNA processing. Both FKH1 and FKH2 play a role as regulators of lifespan in collaboration with the anaphase-promoting complex (APC), likely through combined regulation of stress response, genomic stability, and cell cycle regulation. FKH1 and FKH2 function also in controlling yeast cell morphology by preventing preudohyphal growth. Acts as a rate-limiting replication origin activator via its interaction with the origin recognition complex (ORC). The protein is Fork head protein homolog 2 of Saccharomyces cerevisiae (strain ATCC 204508 / S288c) (Baker's yeast).